We begin with the raw amino-acid sequence, 88 residues long: MANTAQARKRARQNTKRRQNSASQRSMVRTYLKRVDAAIAAKDYDAATEAYKKAVPVLDRMADKGILHKNKAARRKSRLNKTIKGLLA.

Residues 1 to 26 are disordered; sequence MANTAQARKRARQNTKRRQNSASQRS. Over residues 7–19 the composition is skewed to basic residues; that stretch reads ARKRARQNTKRRQ.

This sequence belongs to the bacterial ribosomal protein bS20 family.

Binds directly to 16S ribosomal RNA. This Psychrobacter cryohalolentis (strain ATCC BAA-1226 / DSM 17306 / VKM B-2378 / K5) protein is Small ribosomal subunit protein bS20.